The chain runs to 34 residues: Potassium channel toxin alpha-KTx 6.17 (34 aa).

4 disulfide bridges follow: Cys3/Cys24, Cys9/Cys29, Cys13/Cys31, and Cys19/Cys34.

This sequence belongs to the short scorpion toxin superfamily. Potassium channel inhibitor family. Alpha-KTx 06 subfamily. Expressed by the venom gland.

The protein resides in the secreted. In terms of biological role, this toxin reversibly blocks Shaker B potassium-channels (expressed in insect Sf9 cells) with a Kd of 96.6 nM, and presents an even better affinity toward hKv1.3 (KCNA3), blocking it with a Kd of 17.7 nM. The chain is Potassium channel toxin alpha-KTx 6.17 from Opisthacanthus cayaporum (South American scorpion).